We begin with the raw amino-acid sequence, 436 residues long: Peptidase B (436 aa).

Residues Lys-201 and Asp-206 each coordinate Mn(2+). Lys-213 is an active-site residue. The Mn(2+) site is built by Asp-224, Asp-283, and Glu-285. Residue Arg-287 is part of the active site.

This sequence belongs to the peptidase M17 family. Homohexamer. The cofactor is Mn(2+).

It is found in the cytoplasm. The enzyme catalyses Release of an N-terminal amino acid, Xaa, from a peptide or arylamide. Xaa is preferably Glu or Asp but may be other amino acids, including Leu, Met, His, Cys and Gln.. In terms of biological role, probably plays an important role in intracellular peptide degradation. The chain is Peptidase B from Pectobacterium atrosepticum (strain SCRI 1043 / ATCC BAA-672) (Erwinia carotovora subsp. atroseptica).